A 188-amino-acid chain; its full sequence is D-glycero-beta-D-manno-heptose-1,7-bisphosphate 7-phosphatase (188 aa).

Zn(2+) contacts are provided by Cys-92, His-94, Cys-107, and Cys-109.

The protein belongs to the GmhB family.

It localises to the cytoplasm. The enzyme catalyses D-glycero-beta-D-manno-heptose 1,7-bisphosphate + H2O = D-glycero-beta-D-manno-heptose 1-phosphate + phosphate. It participates in nucleotide-sugar biosynthesis; ADP-L-glycero-beta-D-manno-heptose biosynthesis; ADP-L-glycero-beta-D-manno-heptose from D-glycero-beta-D-manno-heptose 7-phosphate: step 2/4. The protein operates within bacterial outer membrane biogenesis; LPS core biosynthesis. In terms of biological role, converts the D-glycero-beta-D-manno-heptose 1,7-bisphosphate intermediate into D-glycero-beta-D-manno-heptose 1-phosphate by removing the phosphate group at the C-7 position. The chain is D-glycero-beta-D-manno-heptose-1,7-bisphosphate 7-phosphatase (gmhB1) from Photorhabdus laumondii subsp. laumondii (strain DSM 15139 / CIP 105565 / TT01) (Photorhabdus luminescens subsp. laumondii).